Reading from the N-terminus, the 5082-residue chain is Malformin synthetase mlfA (5082 aa).

Residues 225–616 (ERHAANRPHS…CGRADTQVKL (392 aa)) are adenylation 1. The 74-residue stretch at 749-822 (SRLEQKIQLA…EAASLAEVQE (74 aa)) folds into the Carrier 1 domain. S783 carries the O-(pantetheine 4'-phosphoryl)serine modification. Residues 860–1291 (ENVFPCTTMQ…ALNTLSLLQA (432 aa)) form a condensation 1 region. The adenylation 2 stretch occupies residues 1319–1708 (DRWVTRQPEG…GRKDTQVKLR (390 aa)). Positions 1846-1923 (TPTLELERTL…QLAAEVGEPA (78 aa)) constitute a Carrier 2 domain. The residue at position 1883 (S1883) is an O-(pantetheine 4'-phosphoryl)serine. Disordered regions lie at residues 1924 to 1953 (GQSASSASSTTEEGFTFSTPDDSSTNDGVD) and 1986 to 2012 (GGSSSNKTPSVSSSSSSSSSSKRKKNA). Composition is skewed to low complexity over residues 1926-1950 (SASSASSTTEEGFTFSTPDDSSTND) and 1988-2005 (SSSNKTPSVSSSSSSSSS). A condensation 2 region spans residues 2058–2473 (EDIYPATALQ…AVSCSDKETL (416 aa)). The interval 2496 to 2888 (RRTPHAPAVC…IGRRDGQLKL (393 aa)) is adenylation 3. In terms of domain architecture, Carrier 3 spans 3024 to 3100 (RPVTSQEHEM…QLICHLNTIR (77 aa)). An O-(pantetheine 4'-phosphoryl)serine modification is found at S3061. 2 condensation regions span residues 3117–3582 (WVAL…TYDQ) and 3603–4022 (NIYP…EHLV). An adenylation 4 region spans residues 4047-4426 (HNSRQAVFDD…VGRKDNQIKF (380 aa)). Residues 4560–4636 (MPSTAAERKM…DLSDQAKSLI (77 aa)) form the Carrier 4 domain. S4597 carries the O-(pantetheine 4'-phosphoryl)serine modification. The condensation 5 stretch occupies residues 4673–5000 (DVLPTTSFQR…LQTIVQHQNN (328 aa)).

It belongs to the NRP synthetase family.

Its pathway is secondary metabolite biosynthesis. Nonribosomal peptide synthetase; part of the gene cluster that mediates the biosynthesis of malformins, cyclic pentapeptides with a disulfide bond between 2 consecutive cysteins, that show potential anti-tumor as well as antimalarial and antitrypanosomal properties. The nonribosomal peptide synthetase mlfA is responsible of the formation of the cyclic pentapeptide. The malformin biosynthesis clusters in malformin-producing fungi also contain enzymes involved in the formation of the disulfide bond between the two consecutive cysteins within malformins, in addition to additional tailoring enzymes such as methyltransferases or oxidoreductases. They are also composed of up to 4 major facilitator superfamily transporters, and transcription factors probably involved in the regulation of the expression of those clusters. This chain is Malformin synthetase mlfA, found in Aspergillus luchuensis (strain CBS 106.47).